Reading from the N-terminus, the 257-residue chain is MSVAGKNVVFVGGLGFIGYEACKTLITRDLASLFVFDILDKPEAVKALEEINPKTKVYYTKFDITSKDNIKQSLADVIAKVQYIDVLVNGAGILNDPNVEWTMNINLIGLINTTLEAIPLMDKNKKGRGGVIVNIASVLGLEPGPPAAIYCASKFGVMGFSRSLGDPHYYEHTGIAVVTFCPGLTDTPLKNNVATKYTFDYSKEIGEKLNHSKTQKPEVCGAHLAQVIELRDNGAIYISNQGTLTKVKPSVYWEPTY.

Residue 9 to 33 coordinates NAD(+); the sequence is VFVGGLGFIGYEACKTLITRDLASL. Serine 137 contributes to the substrate binding site. Catalysis depends on tyrosine 150, which acts as the Proton acceptor.

This sequence belongs to the short-chain dehydrogenases/reductases (SDR) family. Homodimer.

It carries out the reaction a primary alcohol + NAD(+) = an aldehyde + NADH + H(+). The enzyme catalyses a secondary alcohol + NAD(+) = a ketone + NADH + H(+). The chain is Alcohol dehydrogenase 1 (ADH1) from Ceratitis cosyra (Mango fruit fly).